A 185-amino-acid chain; its full sequence is Elongation factor P (185 aa).

The protein belongs to the elongation factor P family.

It is found in the cytoplasm. The protein operates within protein biosynthesis; polypeptide chain elongation. Functionally, involved in peptide bond synthesis. Stimulates efficient translation and peptide-bond synthesis on native or reconstituted 70S ribosomes in vitro. Probably functions indirectly by altering the affinity of the ribosome for aminoacyl-tRNA, thus increasing their reactivity as acceptors for peptidyl transferase. The chain is Elongation factor P from Petrotoga mobilis (strain DSM 10674 / SJ95).